The sequence spans 136 residues: Protein NrdI (136 aa).

The protein belongs to the NrdI family.

In terms of biological role, probably involved in ribonucleotide reductase function. The sequence is that of Protein NrdI from Klebsiella pneumoniae (strain 342).